The chain runs to 407 residues: Peptidase T (407 aa).

Residue His81 participates in Zn(2+) binding. The active site involves Asp83. Asp142 serves as a coordination point for Zn(2+). Glu176 acts as the Proton acceptor in catalysis. Residues Glu177, Asp199, and His381 each coordinate Zn(2+).

The protein belongs to the peptidase M20B family. The cofactor is Zn(2+).

The protein localises to the cytoplasm. The catalysed reaction is Release of the N-terminal residue from a tripeptide.. In terms of biological role, cleaves the N-terminal amino acid of tripeptides. In Streptococcus sanguinis (strain SK36), this protein is Peptidase T.